Reading from the N-terminus, the 157-residue chain is Transcriptional repressor NrdR (157 aa).

A disordered region spans residues 1–21; sequence MRCPYCGSEDSQVKDSRPAED. The segment at 3–34 is a zinc-finger region; that stretch reads CPYCGSEDSQVKDSRPAEDGNAIRRRRICPDC. Residues 11–21 show a composition bias toward basic and acidic residues; it reads SQVKDSRPAED. One can recognise an ATP-cone domain in the interval 49-139; that stretch reads LMIIKKTGRK…VYRDFSHAED (91 aa).

This sequence belongs to the NrdR family. Zn(2+) is required as a cofactor.

In terms of biological role, negatively regulates transcription of bacterial ribonucleotide reductase nrd genes and operons by binding to NrdR-boxes. This chain is Transcriptional repressor NrdR, found in Sinorhizobium medicae (strain WSM419) (Ensifer medicae).